We begin with the raw amino-acid sequence, 240 residues long: Guanine nucleotide exchange factor sopE2 (240 aa).

The interval 78–240 (LTSKTVKDFM…IANKYLQNAS (163 aa)) is GEF catalytic domain.

This sequence belongs to the GEF (guanine exchange factor) SopE family.

It localises to the secreted. In terms of biological role, activator for CDC42 by directly engaging this Rho GTPase and acting as potent guanine nucleotide exchange factor (GEF). This activation results in actin cytoskeleton rearrangements and stimulates membrane ruffling, promoting bacterial entry into non-phagocytic cells. Chaperone InvB is required for secretion, translocation and stabilization of intracellular levels of sopE2. This Salmonella paratyphi A (strain ATCC 9150 / SARB42) protein is Guanine nucleotide exchange factor sopE2 (sopE2).